The following is a 224-amino-acid chain: Beta-casein (224 aa).

The N-terminal stretch at 1-15 is a signal peptide; that stretch reads MKVLILACLVALALA. Phosphoserine occurs at positions 30, 32, 33, and 34.

The protein belongs to the beta-casein family. In terms of tissue distribution, mammary gland specific. Secreted in milk.

The protein resides in the secreted. Functionally, important role in determination of the surface properties of the casein micelles. The polypeptide is Beta-casein (CSN2) (Bubalus bubalis (Domestic water buffalo)).